A 213-amino-acid polypeptide reads, in one-letter code: LexA repressor (213 aa).

The segment at residues 29-49 is a DNA-binding region (H-T-H motif); it reads RAEIAQALGFRSPNAAEDHLK. Active-site for autocatalytic cleavage activity residues include Ser-131 and Lys-168.

This sequence belongs to the peptidase S24 family. In terms of assembly, homodimer.

It carries out the reaction Hydrolysis of Ala-|-Gly bond in repressor LexA.. Functionally, represses a number of genes involved in the response to DNA damage (SOS response), including recA and lexA. In the presence of single-stranded DNA, RecA interacts with LexA causing an autocatalytic cleavage which disrupts the DNA-binding part of LexA, leading to derepression of the SOS regulon and eventually DNA repair. The protein is LexA repressor of Bordetella avium (strain 197N).